The sequence spans 1460 residues: Collagen alpha-1(I) chain (1460 aa).

The first 22 residues, 1-22, serve as a signal peptide directing secretion; that stretch reads MFSFVDLRLLLLLAATALLTHG. Positions 23-157 are cleaved as a propeptide — N-terminal propeptide; the sequence is QEEGQEEDIP…PPGLGGNFAP (135 aa). The region spanning 34-92 is the VWFC domain; the sequence is VTCVQNGLRYYDRDVWKPEACRICVCDNGNVLCDDVICDETKNCPGAQVPPGECCPVCP. Residues 96–1213 form a disordered region; the sequence is ASPTDQETTG…KAHDGGRYYR (1118 aa). The span at 134–149 shows a compositional bias: pro residues; the sequence is PGLPGPPGPPGPPGPP. Residues 158-174 form a nonhelical region (N-terminal) region; that stretch reads QMSYGYDEKSTGGISVP. Position 166 is an allysine (Lys166). Ser167 carries the phosphoserine modification. A triple-helical region region spans residues 175–1188; sequence GPMGPSGPRG…PGPPGPPGPP (1014 aa). 11 positions are modified to 4-hydroxyproline: Pro186, Pro189, Pro192, Pro201, Pro204, Pro207, Pro222, Pro237, Pro243, Pro252, and Pro258. The span at 194-213 shows a compositional bias: low complexity; sequence PQGFQGPPGEPGEPGASGPM. A compositionally biased stretch (basic and acidic residues) spans 225–239; the sequence is NGDDGEAGKPGRPGE. 5-hydroxylysine; alternate is present on Lys261. Lys261 carries an O-linked (Gal...) hydroxylysine; alternate glycan. Residue Ser267 is modified to Phosphoserine. The segment covering 275 to 291 has biased composition (low complexity); it reads DAGPAGPKGEPGSPGEN. Pro285, Pro288, Pro294, Pro303, and Pro309 each carry 4-hydroxyproline. Positions 314-327 are enriched in low complexity; the sequence is PAGARGNDGATGAA. Over residues 329–341 the composition is skewed to pro residues; it reads PPGPTGPAGPPGF. Pro330, Pro339, Pro342, Pro369, Pro372, Pro384, Pro390, Pro399, Pro405, Pro408, and Pro423 each carry 4-hydroxyproline. Low complexity predominate over residues 375–414; sequence AGAAGPAGNPGADGQPGAKGANGAPGIAGAPGFPGARGPS. Lys426 bears the 5-hydroxylysine mark. Pro432, Pro435, Pro447, Pro456, Pro471, Pro477, Pro486, and Pro492 each carry 4-hydroxyproline. The span at 481 to 490 shows a compositional bias: gly residues; the sequence is GERGGPGSRG. The residue at position 501 (Lys501) is a 5-hydroxylysine. 28 positions are modified to 4-hydroxyproline: Pro510, Pro519, Pro525, Pro531, Pro540, Pro543, Pro552, Pro561, Pro567, Pro579, Pro588, Pro597, Pro600, Pro618, Pro636, Pro642, Pro648, Pro654, Pro660, Pro666, Pro678, Pro687, Pro699, Pro711, Pro714, Pro720, Pro726, and Pro735. Positions 534–560 are enriched in low complexity; that stretch reads KGLTGSPGSPGPDGKTGPPGPAGQDGR. Residues 569-588 show a composition bias toward low complexity; that stretch reads ARGQAGVMGFPGPKGAAGEP. Over residues 630-657 the composition is skewed to low complexity; sequence QGPAGSPGFQGLPGPAGPPGEAGKPGEQ. Residues 692–720 show a composition bias toward low complexity; it reads PRGANGAPGNDGAKGDAGAPGAPGSQGAP. The Cell attachment site signature appears at 741-743; the sequence is RGD. A 5-hydroxylysine modification is found at Lys747. 4-hydroxyproline occurs at positions 753, 768, and 774. Positions 780–794 are enriched in low complexity; that stretch reads AGPSGPAGPTGARGA. Position 783 is a phosphoserine (Ser783). Residues Pro795, Pro801, Pro804, Pro813, Pro819, Pro837, Pro846, and Pro855 each carry the 4-hydroxyproline modification. Residues 807 to 834 are compositionally biased toward low complexity; that stretch reads AGFAGPPGADGQPGAKGEPGDAGAKGDA. The span at 836–848 shows a compositional bias: pro residues; it reads PPGPAGPTGPPGP. Lys858 is modified (5-hydroxylysine). Low complexity predominate over residues 863–879; it reads SAGPPGATGFPGAAGRV. Pro867 and Pro873 each carry 4-hydroxyproline. Position 881 is a 3-hydroxyproline (Pro881). Pro882, Pro891, Pro894, Pro915, Pro924, Pro933, Pro942, Pro960, Pro969, Pro972, Pro978, Pro993, Pro999, Pro1005, Pro1014, and Pro1020 each carry 4-hydroxyproline. Residues 908 to 917 show a composition bias toward low complexity; the sequence is ETGPAGRPGE. The segment covering 927 to 951 has biased composition (low complexity); that stretch reads AGEKGSPGADGPAGAPGTPGPQGIA. Pro residues predominate over residues 992 to 1002; sequence PPGPMGPPGLA. Low complexity predominate over residues 1004–1019; sequence PPGESGREGSPGAEGS. Lys1029 is modified (5-hydroxylysine). The segment covering 1038-1053 has biased composition (pro residues); sequence AGPPGAPGAPGAPGPV. Pro1041, Pro1044, and Pro1047 each carry 4-hydroxyproline. Residues 1074-1088 show a composition bias toward low complexity; the sequence is IGPVGARGPAGPQGP. Positions 1089 to 1091 match the Cell attachment site motif; sequence RGD. Positions 1089 to 1103 are enriched in basic and acidic residues; that stretch reads RGDKGETGEQGDRGI. The residue at position 1092 (Lys1092) is a 5-hydroxylysine. The residue at position 1104 (Lys1104) is a 5-hydroxylysine; alternate. Lys1104 carries an O-linked (Gal...) hydroxylysine; alternate glycan. Pro1116, Pro1119, Pro1122, Pro1140, and Pro1155 each carry 4-hydroxyproline. The segment covering 1122–1155 has biased composition (low complexity); sequence PGEQGPSGASGPAGPRGPPGSAGSPGKDGLNGLP. Pro1160 is subject to 3-hydroxyproline. A 4-hydroxyproline modification is found at Pro1161. A compositionally biased stretch (pro residues) spans 1173 to 1188; sequence VGPPGPPGPPGPPGPP. A 3-hydroxyproline modification is found at Pro1175. A 4-hydroxyproline modification is found at Pro1176. Pro1178 bears the 3-hydroxyproline mark. Pro1179 is subject to 4-hydroxyproline. Pro1181 bears the 3-hydroxyproline mark. A 4-hydroxyproline mark is found at Pro1182, Pro1185, and Pro1188. The interval 1189–1214 is nonhelical region (C-terminal); sequence SGGFDFSFLPQPPQEKAHDGGRYYRA. Positions 1203–1213 are enriched in basic and acidic residues; that stretch reads EKAHDGGRYYR. Position 1204 is an allysine (Lys1204). Residues 1215–1460 constitute a propeptide, C-terminal propeptide; that stretch reads DDANVVRDRD…GMDIGPVCFL (246 aa). A Fibrillar collagen NC1 domain is found at 1225–1460; that stretch reads LEVDTTLKSL…GMDIGPVCFL (236 aa). Disulfide bonds link Cys1255–Cys1287, Cys1295–Cys1458, and Cys1366–Cys1411. Positions 1273, 1275, 1276, 1278, and 1281 each coordinate Ca(2+). A glycan (N-linked (GlcNAc...) asparagine) is linked at Asn1361.

The protein belongs to the fibrillar collagen family. As to quaternary structure, trimers of one alpha 2(I) and two alpha 1(I) chains. Interacts with MRC2. Interacts with TRAM2. Interacts with MFAP4 in a Ca (2+)-dependent manner. In terms of processing, contains mostly 4-hydroxyproline. Proline residues at the third position of the tripeptide repeating unit (G-X-Y) are hydroxylated in some or all of the chains. Contains 3-hydroxyproline at a few sites. This modification occurs on the first proline residue in the sequence motif Gly-Pro-Hyp, where Hyp is 4-hydroxyproline. Post-translationally, lysine residues at the third position of the tripeptide repeating unit (G-X-Y) are 5-hydroxylated in some or all of the chains. In terms of processing, O-glycosylated on hydroxylated lysine residues. The O-linked glycan consists of a Glc-Gal disaccharide.

The protein resides in the secreted. It localises to the extracellular space. The protein localises to the extracellular matrix. In terms of biological role, type I collagen is a member of group I collagen (fibrillar forming collagen). The chain is Collagen alpha-1(I) chain (COL1A1) from Canis lupus familiaris (Dog).